The primary structure comprises 647 residues: TNFAIP3-interacting protein 1 (647 aa).

Residues 39 to 72 are a coiled coil; sequence MQGIKMLGELLEESQMEASRLRQKAEELVKDSEL. A compositionally biased stretch (basic and acidic residues) spans 61–71; sequence QKAEELVKDSE. Positions 61–168 are disordered; that stretch reads QKAEELVKDS…DLGPPPPEDS (108 aa). At S77 the chain carries Phosphoserine. An interaction with Nef region spans residues 95–425; it reads TKVQVHPATS…SPLTRQREYQ (331 aa). Positions 102–115 are enriched in low complexity; the sequence is ATSTAATTTATATT. Residues 143–155 are compositionally biased toward polar residues; it reads EEQNSPETGSHPT. Positions 209-270 form a coiled coil; sequence SKVHKNEQRT…KKLLMNSSCK (62 aa). S297, S416, and S455 each carry phosphoserine. Residues 311-551 are a coiled coil; it reads AAEKKVKLLE…KASGERYHME (241 aa). The segment at 444–601 is required for inhibitory activity of TNF-induced NF-kappa-B activation; that stretch reads ASPSSPPAAF…MEHPPPHPNS (158 aa). The ubiquitin-binding domain (UBD) stretch occupies residues 465–523; the sequence is KQELVTQNELLKQQVKIFEEDFQRERSDRERMNEEKEELKKQVEKLQAQVTLTNAQLKT. The Nuclear localization signal motif lies at 537–543; the sequence is QKRKAKA. A Phosphotyrosine modification is found at Y565. Position 584 is an asymmetric dimethylarginine (R584). Asymmetric dimethylarginine; alternate is present on R612. At R612 the chain carries Omega-N-methylarginine; alternate. Residues 613–647 are disordered; it reads PPCAGIRNQSSQVMDPPPDRPAEPESADNDCDGPQ. Positions 637-647 are enriched in acidic residues; the sequence is ESADNDCDGPQ. Position 638 is a phosphoserine (S638).

Interacts with TNFAIP3 and IKBKG (polyubiquitinated); facilitates TNFAIP3-mediated de-ubiquitination of NEMO/IKBKG. Interacts with polyubiquitin. Interacts with MAPK1, SELPLG and PIK3CD. Interacts with IRAK1 (polyubiquitinated). Interacts with MYD88; the interaction is indicative for participation in an activated TLR-signaling complex. Interacts with TAX1BP1. Post-translationally, phosphorylation at Tyr-565 by SRC-family kinases recruits phosphoinositide-3-kinase (PI3K) PIK3CD:p85 heterodimer which results in integrin activation and leukocyte adhesion to activated endothelium during inflammation. As to expression, ubiquitous. Abundant in heart and skeletal muscle and expressed at lower levels in thymus, liver, kidney, brain and intestinal tract.

The protein resides in the cytoplasm. Its subcellular location is the nucleus. In terms of biological role, inhibits NF-kappa-B activation and TNF-induced NF-kappa-B-dependent gene expression by regulating TAX1BP1 and A20/TNFAIP3-mediated deubiquitination of IKBKG; proposed to link A20/TNFAIP3 to ubiquitinated IKBKG. Involved in regulation of EGF-induced ERK1/ERK2 signaling pathway; blocks MAPK3/MAPK1 nuclear translocation and MAPK1-dependent transcription. Increases cell surface CD4(T4) antigen expression. Involved in the anti-inflammatory response of macrophages and positively regulates TLR-induced activation of CEBPB. Involved in the prevention of autoimmunity; this function implicates binding to polyubiquitin. Involved in leukocyte integrin activation during inflammation; this function is mediated by association with SELPLG and dependent on phosphorylation by SRC-family kinases. The polypeptide is TNFAIP3-interacting protein 1 (Tnip1) (Mus musculus (Mouse)).